A 121-amino-acid polypeptide reads, in one-letter code: Small ribosomal subunit protein uS13 (121 aa).

A disordered region spans residues 97–121 (PVRGQKTHSNARTRKGPRASRIKKK). Positions 101 to 121 (QKTHSNARTRKGPRASRIKKK) are enriched in basic residues.

Belongs to the universal ribosomal protein uS13 family. As to quaternary structure, part of the 30S ribosomal subunit. Forms a loose heterodimer with protein S19. Forms two bridges to the 50S subunit in the 70S ribosome.

Located at the top of the head of the 30S subunit, it contacts several helices of the 16S rRNA. In the 70S ribosome it contacts the 23S rRNA (bridge B1a) and protein L5 of the 50S subunit (bridge B1b), connecting the 2 subunits; these bridges are implicated in subunit movement. Contacts the tRNAs in the A and P-sites. The chain is Small ribosomal subunit protein uS13 from Kosmotoga olearia (strain ATCC BAA-1733 / DSM 21960 / TBF 19.5.1).